Reading from the N-terminus, the 391-residue chain is Formate-dependent phosphoribosylglycinamide formyltransferase (391 aa).

N(1)-(5-phospho-beta-D-ribosyl)glycinamide is bound by residues 20–21 and Glu80; that span reads EL. Residues Arg112, Lys153, 158–163, 193–196, and Glu201 contribute to the ATP site; these read SSGKGQ and EGFI. An ATP-grasp domain is found at 117 to 306; the sequence is RLAAETLGLP…EFALHVRAIL (190 aa). Mg(2+) contacts are provided by Glu265 and Glu277. N(1)-(5-phospho-beta-D-ribosyl)glycinamide contacts are provided by residues Asp284, Lys354, and 361–362; that span reads RR.

The protein belongs to the PurK/PurT family. In terms of assembly, homodimer.

It catalyses the reaction N(1)-(5-phospho-beta-D-ribosyl)glycinamide + formate + ATP = N(2)-formyl-N(1)-(5-phospho-beta-D-ribosyl)glycinamide + ADP + phosphate + H(+). It functions in the pathway purine metabolism; IMP biosynthesis via de novo pathway; N(2)-formyl-N(1)-(5-phospho-D-ribosyl)glycinamide from N(1)-(5-phospho-D-ribosyl)glycinamide (formate route): step 1/1. Involved in the de novo purine biosynthesis. Catalyzes the transfer of formate to 5-phospho-ribosyl-glycinamide (GAR), producing 5-phospho-ribosyl-N-formylglycinamide (FGAR). Formate is provided by PurU via hydrolysis of 10-formyl-tetrahydrofolate. This is Formate-dependent phosphoribosylglycinamide formyltransferase from Shewanella oneidensis (strain ATCC 700550 / JCM 31522 / CIP 106686 / LMG 19005 / NCIMB 14063 / MR-1).